A 2321-amino-acid chain; its full sequence is MDNPPDFDSLLAAFDEDVGIFPHTPATPGDPYQGVSLQTPCVPVPSLAGQSGTYRPHSSYHGQRSLSSGPVPAAHSPRSGRPGQHSTSNGVAAAAPPAATRAVCDTAGPTTDTSSNRPGGRNSSNGADESGESSSDRSPSYSPCDSYCDPDRVSSYRSSVDGSPESGDIESASGSGGTSSPPLLEILAADFGEDTKALDPDYYLRADPRFKAYFYGMDEISPTTSEDIDELLVLLSPQSVNRASERQLADTAASALRAPSPVFWSAFDSRYPHLAPANQSNSDPLCPETSTASAQILHTNSPTPPTSTSPAPIPSPTQPPACLPSPAPISSPVQPPALLPLIFSPITPVEFIQPQSPPSPPQAPSPPAHSSSSCSPSHLAPSPLSSSPLSSPPQLSPAPVSPPSSPPPLSPGELAPSPDPPRHSISSQPQSCPVPSLGRSADFRREVAAPRVRGAGFRYVYRLSTSVAIPSPPREEVELIKHLPGSYAKLWLHDPDGFSPLPEELKRAGRQNMRSFLLTLPDTHRCSAYWDCLATEALLREILPPPHTSSPQKCPRIIELPREPPLLDGDYKPFDWDVECNYAPPLPDFPEPICELSKDWVGCKIWLFSHCSRLVLSVLDDALHSESHENVLGSRGCGWGPRSECPVPPPGMVTLPSCVWEAAARLPTPALQIPKYAYIISAFLRFLGLRVTPEFVFKVPRLSYRLLDRLRCLRRVQYMAYILTQDFSYQLQAAQGLPCFPACAPPPGAGTPLDEDWYGIPATRCPTIPDRLRHCGQFYSDNYCPVLTEITWVDGRDGSTNPWTGLAWKDFKCLHYRYLFYNVRKGFVMAPENYLTENSVIPGCEVTFEMPQPSTTLPPALSAAIREARVELRNRNNIQTGDGSESGEHRDSKVSYAFMVQQLAIAMVELGFPAYGPAIEKRVRPLYKALCDWRAAVTLAARRRFQQLRCNANMDDDGQPMFPPLPVPDWNNPSTDWRPSPPRSGPKKDFCGDLPAPLTSGPRLTTPSSGRMSELPHTTSSPRSSPRPRGPETSPSNEHIIISPPRNPPSNTTHRNVGHVSRSPSSSSSSSSSSSPSSSSLIVPSSPSSSRSPSPSPPRPRADCSSRPRRGRGSNRGGRSGPQSKGRKTSPRTRKLEDEDYLPQETANRRGGGRPRGRPPKSGRAVQRNDIQVTSSSGLADTSPYDLCGSVWWEVPLPPPGRCWFGGLGGHRQALTDSPEIVEAIHRFNTSHGPVPVYVEEMKDYAKQYDALVNSLFHKSMKVNPLNWMHHGKLSPADAALNHIYVQKFQSSYDSPGAAVTGTVNRCIPHIAGAMKERKLLWAFPHIAASIAMTRRYCKDQKTFLFRSLKKAYASMAFPDNSSETEKGISSKPSTSPSVLITTSTQTTAPPHAPKIDVTAIHGRVYQSVVDLSRCLADGSLDDPEFSFAGCTRPDCLVEEFDAARPLEELADACVLACDSVVAALLCGPDGPHRVAKMLSFYDSRITPHVPDLQQWEKCRILLVSWYHELSDLRAAVYGAYGNTPTSQHLDERALAARVVSLIAETIGPLVRQDPDRAWVRMGSRDITSLLLRDWRGTNDGDPGLVKAKHLRRTAELLNDGRSSKGTYGVFAPPRRPDQLFRGPGRPRRSTSSSQSASDKSPIKSTHRHTSDPIPISTPRPERDPAGTPHENTMSGPVQPAANGHSCSSTPTPAKKGNKTSSDTISLKDPTKTRIKASAKAQTDETLPETSTAHPSAMDQSSSLERKNLYTGPAVSSKERRRSAQSSTPSDIGGVSRKRKSAPEQYKQGLQTPLPMPEPSVGQTLLDPTTTTHDILSSSLPNRSCSSSPSPSKRPYHPSCYSPTDIMTGALVGPRGRQDRAAFRQFPVGTVIGQTPPQSVLNAYCPNGAFVELVEFARIPEPWQEVLRYSPEAMADIARVANALPGKYNSNEIITSAASEAFHTATSKLRARTAWMRYQQESPDDVSIVVLYSPLPGEHLFCVPAPDTPPGGLKFDNKRGGLSFLLAAFSNRLCLPKSSAWAGRWKAAPDISPLTRMGVLFLSTEDLGYQGAVEYLQRQCMKRKKKLIIMDTVEDRYRLPNGPCIIEEATRYMKCIISPRSQCCVRWPGLLDFGTTIITSRDVVGPLTLMDLEQYYYCEIGIEDSTINLCCTGNVRYTVETRLEDVSCVPTTPLFYFAAVKHVRPDFLCGETYSNRAARKWGLCAPLRPIYVIESKMNAIVSPSFLHPTARNLCRSVILPPDPEARPVVVHIPEGTCSALAEDMVASIRSSCITWGQHEEGGPETTAQENSDIRAMKVRPPTKPPYMSPLNIGNRDTTFTD.

Disordered regions lie at residues 19-183 (GIFP…SPPL), 296-329 (ILHT…PAPI), 350-438 (EFIQ…PSLG), 954-1180 (MDDD…SGLA), 1360-1392 (DNSS…APPH), 1597-1841 (LLND…PSCY), and 2277-2321 (QHEE…TFTD). Residues 114 to 147 (SSNRPGGRNSSNGADESGESSSDRSPSYSPCDSY) are compositionally biased toward low complexity. 2 stretches are compositionally biased toward pro residues: residues 302–329 (PTPP…PAPI) and 355–367 (QSPP…PSPP). The segment covering 368–389 (AHSSSSCSPSHLAPSPLSSSPL) has biased composition (low complexity). Residues 390-410 (SSPPQLSPAPVSPPSSPPPLS) show a composition bias toward pro residues. Polar residues-rich tracts occupy residues 424 to 433 (SISSQPQSCP) and 1002 to 1011 (PRLTTPSSGR). A compositionally biased stretch (low complexity) spans 1031-1093 (PETSPSNEHI…PSSPSSSRSP (63 aa)). Residues 1151–1161 (GGGRPRGRPPK) show a composition bias toward basic residues. Polar residues-rich tracts occupy residues 1169 to 1180 (NDIQVTSSSGLA) and 1371 to 1389 (SKPS…QTTA). Residues 1630-1644 (STSSSQSASDKSPIK) are compositionally biased toward low complexity. Polar residues-rich tracts occupy residues 1720–1743 (KAQT…QSSS) and 1801–1816 (VGQT…HDIL). Residues 1817 to 1839 (SSSLPNRSCSSSPSPSKRPYHPS) are compositionally biased toward low complexity.

This sequence belongs to the herpesviridae ICP4 family. Post-translationally, a long stretch of serine residues may be a major site of phosphorylation.

It is found in the host nucleus. Functionally, this IE protein is a multifunctional protein capable of migrating to the nucleus, binding to DNA, trans-activating other viral genes, and autoregulating its own synthesis. It is required for the switch from immediate-early to early mode of gene expression. This is Major viral transcription factor ICP4 homolog (MDV084) from Gallus gallus (Chicken).